A 492-amino-acid chain; its full sequence is Ketol-acid reductoisomerase (NADP(+)) (492 aa).

Residues 14 to 208 (LDQLGRCRFM…GGHKAGVLES (195 aa)) enclose the KARI N-terminal Rossmann domain. Residues 45-48 (CGAQ), Arg-68, Arg-76, Ser-78, and 108-110 (DKQ) contribute to the NADP(+) site. Residue His-132 is part of the active site. Gly-158 lines the NADP(+) pocket. 2 KARI C-terminal knotted domains span residues 209-344 (SFVA…NAPK) and 345-485 (YDGK…MTDM). Mg(2+)-binding residues include Asp-217, Glu-221, Glu-389, and Glu-393. Position 414 (Ser-414) interacts with substrate.

It belongs to the ketol-acid reductoisomerase family. Requires Mg(2+) as cofactor.

It catalyses the reaction (2R)-2,3-dihydroxy-3-methylbutanoate + NADP(+) = (2S)-2-acetolactate + NADPH + H(+). It carries out the reaction (2R,3R)-2,3-dihydroxy-3-methylpentanoate + NADP(+) = (S)-2-ethyl-2-hydroxy-3-oxobutanoate + NADPH + H(+). It participates in amino-acid biosynthesis; L-isoleucine biosynthesis; L-isoleucine from 2-oxobutanoate: step 2/4. The protein operates within amino-acid biosynthesis; L-valine biosynthesis; L-valine from pyruvate: step 2/4. Functionally, involved in the biosynthesis of branched-chain amino acids (BCAA). Catalyzes an alkyl-migration followed by a ketol-acid reduction of (S)-2-acetolactate (S2AL) to yield (R)-2,3-dihydroxy-isovalerate. In the isomerase reaction, S2AL is rearranged via a Mg-dependent methyl migration to produce 3-hydroxy-3-methyl-2-ketobutyrate (HMKB). In the reductase reaction, this 2-ketoacid undergoes a metal-dependent reduction by NADPH to yield (R)-2,3-dihydroxy-isovalerate. The sequence is that of Ketol-acid reductoisomerase (NADP(+)) from Haemophilus influenzae (strain 86-028NP).